The primary structure comprises 62 residues: Large ribosomal subunit protein bL32 (62 aa).

The segment at 1–20 (MAVPARHTSKQKKRSRRGHI) is disordered. The segment covering 7 to 20 (HTSKQKKRSRRGHI) has biased composition (basic residues).

Belongs to the bacterial ribosomal protein bL32 family.

The sequence is that of Large ribosomal subunit protein bL32 from Lactobacillus acidophilus (strain ATCC 700396 / NCK56 / N2 / NCFM).